The chain runs to 132 residues: MEALKADVTQGLSKGSLITCADNTGARELKVISVAGYSGTKNRHPKAGIGDKVTVSVTKGTPEMRRQVLEAVVVRQRKPIRRPNGTRVKFEDNAAVIIDDLDEPRGTEIKGPVAREVAERFGSIASTATMIV.

The protein belongs to the universal ribosomal protein uL14 family. In terms of assembly, part of the 50S ribosomal subunit. Forms a cluster with proteins L3 and L24e, part of which may contact the 16S rRNA in 2 intersubunit bridges.

Binds to 23S rRNA. Forms part of two intersubunit bridges in the 70S ribosome. The sequence is that of Large ribosomal subunit protein uL14 from Halorubrum lacusprofundi (strain ATCC 49239 / DSM 5036 / JCM 8891 / ACAM 34).